A 589-amino-acid polypeptide reads, in one-letter code: Serine/threonine-protein kinase PknJ (589 aa).

Residues 1 to 342 (MAHELSAGSV…LPRRPRRYRR (342 aa)) lie on the Cytoplasmic side of the membrane. A Protein kinase domain is found at 14 to 276 (YRIERMLGAG…SAGEFAHAAA (263 aa)). ATP is bound by residues 20–28 (LGAGGMGTV) and K43. D136 acts as the Proton acceptor in catalysis. The helical transmembrane segment at 343–363 (GVAAVAAVMVVAAAAVTAVTM) threads the bilayer. Residues 364–589 (TSHQPRTATP…TNYILAKIPG (226 aa)) are Extracellular-facing. Positions 365–387 (SHQPRTATPPSAAALSPTSSSTT) are enriched in low complexity. A disordered region spans residues 365-400 (SHQPRTATPPSAAALSPTSSSTTPPQPPIVTRSRLP).

Belongs to the protein kinase superfamily. Ser/Thr protein kinase family. In terms of assembly, homodimer.

Its subcellular location is the cell membrane. It carries out the reaction L-seryl-[protein] + ATP = O-phospho-L-seryl-[protein] + ADP + H(+). It catalyses the reaction L-threonyl-[protein] + ATP = O-phospho-L-threonyl-[protein] + ADP + H(+). This chain is Serine/threonine-protein kinase PknJ (pknJ), found in Mycobacterium bovis (strain ATCC BAA-935 / AF2122/97).